A 932-amino-acid chain; its full sequence is Isoleucine--tRNA ligase (932 aa).

Residues Pro-58 to His-68 carry the 'HIGH' region motif. Position 570 (Glu-570) interacts with L-isoleucyl-5'-AMP. Residues Lys-611–Ser-615 carry the 'KMSKS' region motif. Lys-614 contributes to the ATP binding site. Residues Cys-895, Cys-898, Cys-915, and Cys-918 each coordinate Zn(2+).

It belongs to the class-I aminoacyl-tRNA synthetase family. IleS type 1 subfamily. In terms of assembly, monomer. Zn(2+) is required as a cofactor.

Its subcellular location is the cytoplasm. The catalysed reaction is tRNA(Ile) + L-isoleucine + ATP = L-isoleucyl-tRNA(Ile) + AMP + diphosphate. Functionally, catalyzes the attachment of isoleucine to tRNA(Ile). As IleRS can inadvertently accommodate and process structurally similar amino acids such as valine, to avoid such errors it has two additional distinct tRNA(Ile)-dependent editing activities. One activity is designated as 'pretransfer' editing and involves the hydrolysis of activated Val-AMP. The other activity is designated 'posttransfer' editing and involves deacylation of mischarged Val-tRNA(Ile). This chain is Isoleucine--tRNA ligase, found in Dechloromonas aromatica (strain RCB).